Consider the following 326-residue polypeptide: Beta-ketoacyl-[acyl-carrier-protein] synthase III (326 aa).

Catalysis depends on residues Cys120 and His253. Residues 254 to 258 (QANIR) form an ACP-binding region. The active site involves Asn283.

It belongs to the thiolase-like superfamily. FabH family. In terms of assembly, homodimer.

Its subcellular location is the cytoplasm. It catalyses the reaction malonyl-[ACP] + acetyl-CoA + H(+) = 3-oxobutanoyl-[ACP] + CO2 + CoA. It participates in lipid metabolism; fatty acid biosynthesis. Its function is as follows. Catalyzes the condensation reaction of fatty acid synthesis by the addition to an acyl acceptor of two carbons from malonyl-ACP. Catalyzes the first condensation reaction which initiates fatty acid synthesis and may therefore play a role in governing the total rate of fatty acid production. Possesses both acetoacetyl-ACP synthase and acetyl transacylase activities. Its substrate specificity determines the biosynthesis of branched-chain and/or straight-chain of fatty acids. The polypeptide is Beta-ketoacyl-[acyl-carrier-protein] synthase III (Cupriavidus taiwanensis (strain DSM 17343 / BCRC 17206 / CCUG 44338 / CIP 107171 / LMG 19424 / R1) (Ralstonia taiwanensis (strain LMG 19424))).